The sequence spans 370 residues: MPSAKPLFCLATLAGAALAAPAPSRVSDFTKRSTCTFTDAATASESKTSCSDIVLKDITVPAGETLNLKDLNDGTTVTFEGTTTWEYEEWDGPLLRISGKDITVTQSSDAVLDGNGAKWWDGEGTNGGKTKPKFFYAHDLDDSKISGLYIKNTPVQAISVESDNLVIEDVTIDNSDGDSEGGHNTDGFDISESTYITITGATVKNQDDCVAINSGENIYFSGGTCSGGHGLSIGSVGGRDDNTVKNVTFIDSTVSDSENGVRIKTVYDATGTVEDITYSNIQLSGISDYGIVIEQDYENGDPTGTPSNGVTISDVTLEDITGSVDSDAVEIYILCGDGSCSDWTMSGIDITGGETSSDCENVPSGASCDQ.

The first 19 residues, 1–19 (MPSAKPLFCLATLAGAALA), serve as a signal peptide directing secretion. Positions 20–32 (APAPSRVSDFTKR) are excised as a propeptide. Cysteines 35 and 50 form a disulfide. 6 PbH1 repeats span residues 162 to 192 (SDNLVIEDVTIDNSDGDSEGGHNTDGFDISE), 193 to 214 (STYITITGATVKNQDDCVAINS), 215 to 235 (GENIYFSGGTCSGGHGLSIGS), 244 to 265 (VKNVTFIDSTVSDSENGVRIKT), 273 to 295 (VEDITYSNIQLSGISDYGIVIEQ), and 307 to 352 (SNGV…DITG). The active-site Proton donor is the aspartate 207. Residues cysteine 209 and cysteine 225 are joined by a disulfide bond. Histidine 229 is an active-site residue. N-linked (GlcNAc...) asparagine glycosylation is present at asparagine 246. Disulfide bonds link cysteine 335/cysteine 340 and cysteine 359/cysteine 368.

It belongs to the glycosyl hydrolase 28 family.

Its subcellular location is the secreted. The catalysed reaction is (1,4-alpha-D-galacturonosyl)n+m + H2O = (1,4-alpha-D-galacturonosyl)n + (1,4-alpha-D-galacturonosyl)m.. In terms of biological role, involved in maceration and soft-rotting of plant tissue. Hydrolyzes the 1,4-alpha glycosidic bonds of de-esterified pectate in the smooth region of the plant cell wall. This Aspergillus niger (strain ATCC MYA-4892 / CBS 513.88 / FGSC A1513) protein is Probable endopolygalacturonase A (pgaA).